Consider the following 931-residue polypeptide: MRKGLRATAARCGLGLGYLLQMLVLPALALLSASGTGSAAQDDEFFHELPETFPSDPPEPLPHFLIEPEEAYIVKNKPVNLYCKASPATQIYFKCNSEWVHQKDHVVDERVDETSGLIVREVSIEISRQQVEELFGPEDYWCQCVAWSSAGTTKSRKAYVRIAYLRKTFEQEPLGKEVSLEQEVLLQCRPPEGIPVAEVEWLKNEDIIDPAEDRNFYITIDHNLIIKQARLSDTANYTCVAKNIVAKRKSTTATVIVYVNGGWSTWTEWSVCNSRCGRGYQKRTRTCTNPAPLNGGAFCEGQSVQKIACTTLCPVDGRWTSWSKWSTCGTECTHWRRRECTAPAPKNGGKDCDGLVLQSKNCTDGLCMQAAPDSDDVALYVGIVIAVTVCLAITVVVALFVYRKNHRDFESDIIDSSALNGGFQPVNIKAARQDLLAVPPDLTSAAAMYRGPVYALHDVSDKIPMTNSPILDPLPNLKIKVYNSSGAVTPQDDLAEFSSKLSPQMTQSLLENEALNLKNQSLARQTDPSCTAFGTFNSLGGHLIIPNSGVSLLIPAGAIPQGRVYEMYVTVHRKENMRPPMEDSQTLLTPVVSCGPPGALLTRPVILTLHHCADPSTEDWKIQLKNQAVQGQWEDVVVVGEENFTTPCYIQLDAEACHILTENLSTYALVGQSTTKAAAKRLKLAIFGPLCCSSLEYSIRVYCLDDTQDALKEVLQLERQMGGQLLEEPKALHFKGSIHNLRLSIHDIAHSLWKSKLLAKYQEIPFYHIWSGSQRNLHCTFTLERLSLNTVELVCKLCVRQVEGEGQIFQLNCTVSEEPTGIDLPLLDPASTITTVTGPSAFSIPLPIRQKLCSSLDAPQTRGHDWRMLAHKLNLDRYLNYFATKSSPTGVILDLWEAQNFPDGNLSMLAAVLEEMGRHETVVSLAAEGQY.

Residues 1-40 (MRKGLRATAARCGLGLGYLLQMLVLPALALLSASGTGSAA) form the signal peptide. The Extracellular portion of the chain corresponds to 41 to 380 (QDDEFFHELP…APDSDDVALY (340 aa)). The region spanning 62–159 (PHFLIEPEEA…AGTTKSRKAY (98 aa)) is the Ig-like domain. Disulfide bonds link C83/C144, C95/C142, C188/C239, C272/C309, C276/C313, C287/C299, C328/C362, C332/C367, and C340/C352. The 96-residue stretch at 161–256 (RIAYLRKTFE…KRKSTTATVI (96 aa)) folds into the Ig-like C2-type domain. N-linked (GlcNAc...) asparagine glycosylation is present at N236. 2 consecutive TSP type-1 domains span residues 260-314 (NGGW…TLCP) and 316-368 (DGRW…GLCM). A glycan (N-linked (GlcNAc...) asparagine) is linked at N361. The helical transmembrane segment at 381–401 (VGIVIAVTVCLAITVVVALFV) threads the bilayer. At 402–931 (YRKNHRDFES…VVSLAAEGQY (530 aa)) the chain is on the cytoplasmic side. The tract at residues 402–931 (YRKNHRDFES…VVSLAAEGQY (530 aa)) is required for netrin-mediated axon repulsion of neuronal growth cones. The residue at position 502 (S502) is a Phosphoserine. In terms of domain architecture, ZU5 spans 530–673 (CTAFGTFNSL…LSTYALVGQS (144 aa)). The residue at position 568 (Y568) is a Phosphotyrosine. Positions 694–712 (SLEYSIRVYCLDDTQDALK) are interaction with DCC. In terms of domain architecture, Death spans 850-929 (QKLCSSLDAP…ETVVSLAAEG (80 aa)).

This sequence belongs to the unc-5 family. Interacts with DCC (via cytoplasmic domain). Interacts (tyrosine phosphorylated form) with PTPN11. Interacts (via extracellular domain) with FLRT3 (via extracellular domain). Interacts (via Ig-like C2-type domain) with DSCAM (via extracellular domain). Interacts (via death domain) with DAPK1. Interacts (via cytoplasmic domain) with TUBB3; this interaction is decreased by NTN1/Netrin-1. Post-translationally, phosphorylated on different cytoplasmic tyrosine residues. Phosphorylation of Tyr-568 leads to an interaction with PTPN11 phosphatase, suggesting that its activity is regulated by phosphorylation/dephosphorylation. Tyrosine phosphorylation is netrin-dependent. Proteolytically cleaved by caspases during apoptosis. The cleavage does not take place when the receptor is associated with netrin ligand. Its cleavage by caspases is required to induce apoptosis. In terms of tissue distribution, expressed in cortical and cerebellar neurons, including cells of the external and internal granular layer and of the Purkinje cell layer (at protein level). Mainly expressed in regions of differentiating neurons. Highly expressed in brain and lung. Expressed in the cerebellum and the neurons of the hippocampus, with enrichment in neurons of the CA3 hippocampal pyramidal layer. Weakly expressed in testis, ovary, spleen, thymus and bladder. Expressed at very low level in kidney, intestine and salivary gland.

It localises to the cell membrane. It is found in the cell surface. The protein resides in the synapse. The protein localises to the synaptosome. Its subcellular location is the cell projection. It localises to the dendrite. It is found in the axon. The protein resides in the growth cone. The protein localises to the lamellipodium. Its subcellular location is the filopodium. Its function is as follows. Receptor for netrin required for axon guidance. Mediates axon repulsion of neuronal growth cones in the developing nervous system upon ligand binding. NTN1/Netrin-1 binding might cause dissociation of UNC5C from polymerized TUBB3 in microtubules and thereby lead to increased microtubule dynamics and axon repulsion. Axon repulsion in growth cones may also be caused by its association with DCC that may trigger signaling for repulsion. Might also collaborate with DSCAM in NTN1-mediated axon repulsion independently of DCC. Also involved in corticospinal tract axon guidance independently of DCC. Involved in dorsal root ganglion axon projection towards the spinal cord. It also acts as a dependence receptor required for apoptosis induction when not associated with netrin ligand. This is Netrin receptor UNC5C (Unc5c) from Mus musculus (Mouse).